The chain runs to 257 residues: 3-methyl-2-oxobutanoate hydroxymethyltransferase (257 aa).

The Mg(2+) site is built by Asp-42 and Asp-86. 3-methyl-2-oxobutanoate is bound by residues 42–43, Asp-86, and Lys-116; that span reads DS. Mg(2+) is bound at residue Glu-118. Residue Glu-185 is the Proton acceptor of the active site.

Belongs to the PanB family. As to quaternary structure, homodecamer; pentamer of dimers. Mg(2+) is required as a cofactor.

It is found in the cytoplasm. It catalyses the reaction 3-methyl-2-oxobutanoate + (6R)-5,10-methylene-5,6,7,8-tetrahydrofolate + H2O = 2-dehydropantoate + (6S)-5,6,7,8-tetrahydrofolate. The protein operates within cofactor biosynthesis; (R)-pantothenate biosynthesis; (R)-pantoate from 3-methyl-2-oxobutanoate: step 1/2. Functionally, catalyzes the reversible reaction in which hydroxymethyl group from 5,10-methylenetetrahydrofolate is transferred onto alpha-ketoisovalerate to form ketopantoate. This Prochlorococcus marinus (strain MIT 9301) protein is 3-methyl-2-oxobutanoate hydroxymethyltransferase.